The primary structure comprises 73 residues: METQKLVSMVKEALDKYSYPLTAKNIKAVIQKEYKVVLPTGSINSILYSNTELFEKVDKTNTIYPPLWMRKTN.

It belongs to the asfivirus I73R family.

It localises to the virion. This is an uncharacterized protein from Ornithodoros (relapsing fever ticks).